The sequence spans 715 residues: Polyribonucleotide nucleotidyltransferase (715 aa).

Positions 488 and 494 each coordinate Mg(2+). The region spanning 555–614 (PKIETIKIPVDKIREVIGSGGKVIREIVEKTGAKIDIGEDGTIKIAAAEQTKIDAAKEWI) is the KH domain. The S1 motif domain occupies 624–692 (GQIYTGKVVK…DRGKTRLSMK (69 aa)). The segment at 692–715 (KVVDQETGEDLSKSNEKAEEPADA) is disordered. The segment covering 701–715 (DLSKSNEKAEEPADA) has biased composition (basic and acidic residues).

This sequence belongs to the polyribonucleotide nucleotidyltransferase family. Mg(2+) is required as a cofactor.

It is found in the cytoplasm. The enzyme catalyses RNA(n+1) + phosphate = RNA(n) + a ribonucleoside 5'-diphosphate. Functionally, involved in mRNA degradation. Catalyzes the phosphorolysis of single-stranded polyribonucleotides processively in the 3'- to 5'-direction. The protein is Polyribonucleotide nucleotidyltransferase of Phenylobacterium zucineum (strain HLK1).